The following is a 227-amino-acid chain: MESFEKLETLLGYSFKNKELLIEALSHPSLRQYHEYKYDKDYERLEFLGDAVLNLLITEILFKNFENYKEGNLAKIRSYLVCKETICIVGTKLALKDYIIMTHGEEVAGGRDNPNNIENVTEALIAAIYLDSNIEITHNIIEKLWAEFMKVQNLTDYDPKTALQEWAQASSNHLPIYRLIKREGAAHSSIFTVLVKVKDYEQICTGYSIKEAEKKAARCLLHRLKND.

In terms of domain architecture, RNase III spans 4-133 (FEKLETLLGY…LIAAIYLDSN (130 aa)). Glu-46 is a binding site for Mg(2+). Asp-50 is a catalytic residue. Mg(2+)-binding residues include Asn-119 and Glu-122. The active site involves Glu-122. The DRBM domain occupies 158 to 226 (DPKTALQEWA…ARCLLHRLKN (69 aa)).

Belongs to the ribonuclease III family. As to quaternary structure, homodimer. Mg(2+) is required as a cofactor.

The protein localises to the cytoplasm. The enzyme catalyses Endonucleolytic cleavage to 5'-phosphomonoester.. Its function is as follows. Digests double-stranded RNA. Involved in the processing of primary rRNA transcript to yield the immediate precursors to the large and small rRNAs (23S and 16S). Processes some mRNAs, and tRNAs when they are encoded in the rRNA operon. Processes pre-crRNA and tracrRNA of type II CRISPR loci if present in the organism. In Rickettsia typhi (strain ATCC VR-144 / Wilmington), this protein is Ribonuclease 3.